The chain runs to 278 residues: 3-methyl-2-oxobutanoate hydroxymethyltransferase (278 aa).

Residues aspartate 44 and aspartate 83 each contribute to the Mg(2+) site. 3-methyl-2-oxobutanoate is bound by residues 44 to 45 (DS), aspartate 83, and lysine 112. Glutamate 114 is a binding site for Mg(2+). The active-site Proton acceptor is the glutamate 181.

The protein belongs to the PanB family. As to quaternary structure, homodecamer; pentamer of dimers. It depends on Mg(2+) as a cofactor.

It localises to the cytoplasm. It catalyses the reaction 3-methyl-2-oxobutanoate + (6R)-5,10-methylene-5,6,7,8-tetrahydrofolate + H2O = 2-dehydropantoate + (6S)-5,6,7,8-tetrahydrofolate. It participates in cofactor biosynthesis; (R)-pantothenate biosynthesis; (R)-pantoate from 3-methyl-2-oxobutanoate: step 1/2. In terms of biological role, catalyzes the reversible reaction in which hydroxymethyl group from 5,10-methylenetetrahydrofolate is transferred onto alpha-ketoisovalerate to form ketopantoate. This is 3-methyl-2-oxobutanoate hydroxymethyltransferase from Roseiflexus sp. (strain RS-1).